The sequence spans 516 residues: Cytochrome P450 93G1 (516 aa).

Residues 11 to 31 (LLGMGTTMGALALALVVVVVV) form a helical membrane-spanning segment. Cysteine 454 contributes to the heme binding site.

This sequence belongs to the cytochrome P450 family. Requires heme as cofactor.

The protein localises to the membrane. The enzyme catalyses a flavanone + reduced [NADPH--hemoprotein reductase] + O2 = a flavone + oxidized [NADPH--hemoprotein reductase] + 2 H2O + H(+). Its pathway is secondary metabolite biosynthesis; flavonoid biosynthesis. Functionally, functions as a flavone synthase II (FNSII) that catalyzes the direct conversion of flavanones to flavones. In vitro, can convert naringenin and eriodictyol to apigenin and luteolin, respectively. Acts as a key branch point enzyme that channels flavanones to the biosynthesis of soluble tricin O-linked conjugates. The polypeptide is Cytochrome P450 93G1 (Oryza sativa subsp. japonica (Rice)).